The chain runs to 147 residues: Nucleoside diphosphate kinase (147 aa).

The ATP site is built by K11, F59, R87, T93, R104, and N114. H117 acts as the Pros-phosphohistidine intermediate in catalysis.

Belongs to the NDK family. Mg(2+) is required as a cofactor.

It is found in the cytoplasm. It catalyses the reaction a 2'-deoxyribonucleoside 5'-diphosphate + ATP = a 2'-deoxyribonucleoside 5'-triphosphate + ADP. The enzyme catalyses a ribonucleoside 5'-diphosphate + ATP = a ribonucleoside 5'-triphosphate + ADP. In terms of biological role, major role in the synthesis of nucleoside triphosphates other than ATP. The ATP gamma phosphate is transferred to the NDP beta phosphate via a ping-pong mechanism, using a phosphorylated active-site intermediate. This Sulfurisphaera tokodaii (strain DSM 16993 / JCM 10545 / NBRC 100140 / 7) (Sulfolobus tokodaii) protein is Nucleoside diphosphate kinase.